Here is a 534-residue protein sequence, read N- to C-terminus: Inorganic phosphate transporter 1-4 (534 aa).

Over 1–24 the chain is Cytoplasmic; the sequence is MAREQLQVLNALDVAKTQWYHFTA. A helical membrane pass occupies residues 25–45; the sequence is IIIAGMGFFTDAYDLFCISLV. Over 46–70 the chain is Extracellular; the sequence is TKLLGRIYYHVEGAQKPGTLPPNVA. The helical transmembrane segment at 71 to 91 threads the bilayer; it reads AAVNGVAFCGTLAGQLFFGWL. Residues 92 to 99 lie on the Cytoplasmic side of the membrane; sequence GDKLGRKK. A helical transmembrane segment spans residues 100 to 120; it reads VYGMTLMVMVLCSIASGLSFG. Residues 121-131 are Extracellular-facing; it reads HEPKAVMATLC. A helical transmembrane segment spans residues 132–152; it reads FFRFWLGFGIGGDYPLSATIM. At 153-161 the chain is on the cytoplasmic side; it reads SEYANKKTR. Residues 162 to 182 traverse the membrane as a helical segment; sequence GAFVSAVFAMQGFGIMAGGIF. Residues 183–211 are Extracellular-facing; it reads AIIISSAFEAKFPSPAYADDALGSTIPQA. The helical transmembrane segment at 212-232 threads the bilayer; the sequence is DLVWRIILMAGAIPAAMTYYS. Over 233 to 293 the chain is Cytoplasmic; it reads RSKMPETARY…GLFSKEFMSR (61 aa). Residues 294–314 traverse the membrane as a helical segment; that stretch reads HGLHLLGTTSTWFLLDIAFYS. Residues 315–349 are Extracellular-facing; the sequence is QNLFQKDIFSAIGWIPPAQSMNAIQEVFKIARAQT. Residues 350 to 370 traverse the membrane as a helical segment; sequence LIALCSTVPGYWFTVAFIDVI. Residues 371 to 372 lie on the Cytoplasmic side of the membrane; the sequence is GR. A helical membrane pass occupies residues 373-393; sequence FAIQMMGFFFMTVFMFALAIP. At 394-403 the chain is on the extracellular side; it reads YNHWTHKENR. Residues 404 to 424 traverse the membrane as a helical segment; the sequence is IGFVIMYSLTFFFANFGPNAT. The Cytoplasmic portion of the chain corresponds to 425-442; it reads TFVVPAEIFPARFRSTCH. The helical transmembrane segment at 443–463 threads the bilayer; the sequence is GISAASGKLGAMVGAFGFLYL. Topologically, residues 464-484 are extracellular; it reads AQNPDKDKTDAGYPPGIGVRN. The chain crosses the membrane as a helical span at residues 485–505; the sequence is SLIVLGVVNFLGILFTFLVPE. Topologically, residues 506–534 are cytoplasmic; that stretch reads SKGKSLEEMSGENEDNENSNNDSRTVPIV. Residues 512–534 are disordered; sequence EEMSGENEDNENSNNDSRTVPIV. Residues serine 524 and serine 528 each carry the phosphoserine modification.

The protein belongs to the major facilitator superfamily. Phosphate:H(+) symporter (TC 2.A.1.9) family. Interacts with NLA. In terms of processing, ubiquitinated by NLA. Ubiquitination of PHT1-4 leads to its degradation by the proteasome. As to expression, mostly expressed in roots, in tissues connecting the lateral roots to the primary root. Also present in flowers, in senescing anther filaments and in the abscission zone at the base of siliques. Expressed in hydathodes and axillary buds, and in some senescing leaves. After Pi starvation, localized in all cells of undifferentiated root segments, including root tips and root hairs, and in the epidermis, cortex and stellar regions of mature root segments.

It is found in the cell membrane. Its function is as follows. High-affinity transporter for external inorganic phosphate. Acts as a H(+):phosphate symporter in both low- and high-Pi conditions. Confers sensitivity to arsenate. The chain is Inorganic phosphate transporter 1-4 (PHT1-4) from Arabidopsis thaliana (Mouse-ear cress).